We begin with the raw amino-acid sequence, 855 residues long: DNA mismatch repair protein MutS (855 aa).

Residue 618 to 625 (GPNMGGKS) coordinates ATP.

It belongs to the DNA mismatch repair MutS family.

In terms of biological role, this protein is involved in the repair of mismatches in DNA. It is possible that it carries out the mismatch recognition step. This protein has a weak ATPase activity. In Shewanella loihica (strain ATCC BAA-1088 / PV-4), this protein is DNA mismatch repair protein MutS.